Consider the following 191-residue polypeptide: Putative zinc metalloprotease MJ0611 (191 aa).

Residues 20–40 form a helical membrane-spanning segment; it reads AIAFIFSYPNFSILVFIISLI. H49 is a Zn(2+) binding site. E50 is an active-site residue. H53 lines the Zn(2+) pocket. Helical transmembrane passes span 73–93, 110–130, 133–153, and 171–191; these read LILGFILKLVFGATFIAPGAV, LAGPLTNVALAFVFFILMLIF, GSLLYWIGIFGFHINLFLAGF, and PFIWAIVGLPLIGYMLYMMFW.

Belongs to the peptidase M50B family. Requires Zn(2+) as cofactor.

It localises to the cell membrane. The chain is Putative zinc metalloprotease MJ0611 from Methanocaldococcus jannaschii (strain ATCC 43067 / DSM 2661 / JAL-1 / JCM 10045 / NBRC 100440) (Methanococcus jannaschii).